The chain runs to 902 residues: MWIPSKLTRPGRLHNAIVRPRVLDLLQQAPYYKLVLFRSPAGYGKTTMAAQWLSDKPNVGWYSIDDSDNDGFRFVNYLLQALNKATNFSCSNAQKLAEKRQISSLRSLFSEVFAEMADFHQECYVVLDDYHLITNDEIHESMRFFLKHMPDNLTVVVTSRAAPPLGTANLRVRDLMIEIGNEMLAFDTEETTRFFNQRIADGIDEDMANSLRTYVEGWPSAMQLIALQAQHQNRTLAQTVESVSQFNHAHLWDYLVEEVFDLLDHETRHFLMQVSVLDHFNDELVFALTQREDALGLIESLNRYGLFIYPLEGEHNWFRFHNLFGEFLSHERQARIPQQEKDLHRNAAVAWLQQKSPHQAIHHAQKSNDKDLVVEILNEFGWKMFNQGELSTLEHAINKLDAELLFSHPKLTMLRAWLAQSQHRYNQVGQLLEEAEEEHKKRNIELDIHYQGQANALLAQVAINSNQPEKALELAELALSQLDNTIYRSRIVATSVVGEVNHVLGKLDRALPMMQQTEKLARQYQVYHQALWAILQQSEILIAQGYVQAAFELQDSGFRLIEDQQLQHVPLHEFLLRIRAQVLWCWNRLDEAEECAYRGLQILENHSPSKHLHSYSMLARIAIGRGELDKAGKFIEHIQHLMKQSTYHVDWTANASLSLILFWQARGNTEAMQEWLNTAVRPESACNHFLQLQWRNIVRAHINLGQYEEARQALNFLQSEARRTNLITDTNRNLVVEAVLAARQKDEEQAKALLKEALVMTNQTGMVGNFLIDGATIGGLLEKLSLRHELGDLERHRAQQLMKDISSNQRSRSIHFDEDFIEKLVNHPNVPELVRTSPLTQREWQVLGLIYSGFSNEQIAQELDVAGTTIKTHIRNLYQKLNIANRKEAIVTAENLLQLMGY.

39-46 (SPAGYGKT) contacts ATP. The region spanning 832-897 (ELVRTSPLTQ…EAIVTAENLL (66 aa)) is the HTH luxR-type domain. The H-T-H motif DNA-binding region spans 856–875 (NEQIAQELDVAGTTIKTHIR).

This sequence belongs to the MalT family. Monomer in solution. Oligomerizes to an active state in the presence of the positive effectors ATP and maltotriose.

Its activity is regulated as follows. Activated by ATP and maltotriose, which are both required for DNA binding. In terms of biological role, positively regulates the transcription of the maltose regulon whose gene products are responsible for uptake and catabolism of malto-oligosaccharides. Specifically binds to the promoter region of its target genes, recognizing a short DNA motif called the MalT box. The polypeptide is HTH-type transcriptional regulator MalT (Vibrio parahaemolyticus serotype O3:K6 (strain RIMD 2210633)).